Consider the following 334-residue polypeptide: tRNA N6-adenosine threonylcarbamoyltransferase (334 aa).

Fe cation is bound by residues His110 and His114. Residues 133-137 (IVSGG), Asp166, Gly179, Asp183, and Asn275 contribute to the substrate site. Asp303 lines the Fe cation pocket.

It belongs to the KAE1 / TsaD family. Requires Fe(2+) as cofactor.

It is found in the cytoplasm. It carries out the reaction L-threonylcarbamoyladenylate + adenosine(37) in tRNA = N(6)-L-threonylcarbamoyladenosine(37) in tRNA + AMP + H(+). Its function is as follows. Required for the formation of a threonylcarbamoyl group on adenosine at position 37 (t(6)A37) in tRNAs that read codons beginning with adenine. Is involved in the transfer of the threonylcarbamoyl moiety of threonylcarbamoyl-AMP (TC-AMP) to the N6 group of A37, together with TsaE and TsaB. TsaD likely plays a direct catalytic role in this reaction. The protein is tRNA N6-adenosine threonylcarbamoyltransferase of Salinibacter ruber (strain DSM 13855 / M31).